Consider the following 786-residue polypeptide: MRTYSCLQLVIWTCIFHMVDNSTLQGKDSSHFLRRIVNLKKDEGKMLHRAKRGWMWNQFFLLEEYTGTDTQYVGKLHTDQDKGDGNLKYILTGDGAGNLFVIDENTGDIHAAKRLDREEKSLYILRAKAIDRKTGRQVEPESEFIIKIHDINDNEPKFTKDLYTASVPEMSGVGTSVIQVTATDADDANYGNSAKVVYSILQGQPYFSVDPESGIIKTALPDMSRENKEQYQVVIQAKDMGGQMGGLSGTTTVNITLTDVNNNPPRFPQSTYQFNSLESAPLGTHLGRIKANDPDMGENAELEYSIAEGEGSDMFDVITDKDTQEGIITVKQNLDFEKKMLYTLRVDASNTHPDPRFLHLGPFKDSAMVKISVEDVDEPPVFSKLSYLMEVDEDVKEGSIIGQVTAYDPDAMNNIIKYSVDRHTDMDRVFSIHSENGSIFTLKPLDRESSPWHNITITATEINNPKQSSQIPVFIRILDINDHAPEFATYYETFVCENAKSGQLIQTISVMDKDDPPRGHKFFFEPVPEFPLNPNFTIVDNKDNTAGIVTRKDGYSRNKMNTYLLPVLIFDNDYPIQSSTGTLTIRVCACDNLGNMQSCNAEALMLAAGLSTGALIAILLCVVILLTLIVLFAALKRQRKKEPLIISKDDVRDNIVTYNDEGGGEEDTQAFDIGTLRNPEAREDSKLRRDVMPETIFQIRRTVPLWENIDVQDFIHRRLKENDSDPSAPPYDSLATYAYEGNDSVANSLSSLESLTADCNQDYDYLSDWGPRFKKLAEMYGGNDSD.

An N-terminal signal peptide occupies residues 1–21; the sequence is MRTYSCLQLVIWTCIFHMVDN. A glycan (N-linked (GlcNAc...) asparagine) is linked at N21. A propeptide spanning residues 22-52 is cleaved from the precursor; the sequence is STLQGKDSSHFLRRIVNLKKDEGKMLHRAKR. Topologically, residues 22-614 are extracellular; the sequence is STLQGKDSSH…MLAAGLSTGA (593 aa). Cadherin domains lie at 54-158, 159-267, 268-382, 383-487, and 487-604; these read WMWN…EPKF, TKDL…PPRF, PQST…PPVF, SKLS…APEF, and FATY…AEAL. The N-linked (GlcNAc...) asparagine glycan is linked to N254. N-linked (GlcNAc...) asparagine glycosylation is found at N454 and N535. The chain crosses the membrane as a helical span at residues 615 to 635; the sequence is LIAILLCVVILLTLIVLFAAL. Topologically, residues 636 to 786 are cytoplasmic; sequence KRQRKKEPLI…AEMYGGNDSD (151 aa). Residue S785 is modified to Phosphoserine.

It is found in the cell membrane. In terms of biological role, cadherins are calcium-dependent cell adhesion proteins. They preferentially interact with themselves in a homophilic manner in connecting cells; cadherins may thus contribute to the sorting of heterogeneous cell types. The protein is Cadherin-9 (Cdh9) of Mus musculus (Mouse).